A 77-amino-acid chain; its full sequence is NAD(P)H-quinone oxidoreductase subunit L (77 aa).

2 helical membrane-spanning segments follow: residues 12-32 and 47-67; these read LIAY…LLFY and LGIY…SPFL.

This sequence belongs to the complex I NdhL subunit family. NDH-1 can be composed of about 15 different subunits; different subcomplexes with different compositions have been identified which probably have different functions.

Its subcellular location is the cellular thylakoid membrane. The enzyme catalyses a plastoquinone + NADH + (n+1) H(+)(in) = a plastoquinol + NAD(+) + n H(+)(out). It catalyses the reaction a plastoquinone + NADPH + (n+1) H(+)(in) = a plastoquinol + NADP(+) + n H(+)(out). In terms of biological role, NDH-1 shuttles electrons from an unknown electron donor, via FMN and iron-sulfur (Fe-S) centers, to quinones in the respiratory and/or the photosynthetic chain. The immediate electron acceptor for the enzyme in this species is believed to be plastoquinone. Couples the redox reaction to proton translocation, and thus conserves the redox energy in a proton gradient. Cyanobacterial NDH-1 also plays a role in inorganic carbon-concentration. This is NAD(P)H-quinone oxidoreductase subunit L from Prochlorococcus marinus (strain MIT 9301).